The primary structure comprises 638 residues: MGIRGMLRAAALLLLIRTWLAESNGPSPTPKFHFELSSSTPEVILDLFNCKNCANEAVVQKILDRVLSTYDVRLRPNFGGAPVPVSVSIYVSSIEQISEINMDYTITMFLHQTWKDTRLAYYETNLNLTLDYRMHEKLWVPDCYFVNSKDAFVHDVTVENRVFQLHPDGTVRYGIRLTTTAACSLDLQKFPMDKQSCKLEVESYGYTVEDIVLSWEDDNAIHITDGLHIPQYTYLGRTITSKEVYFYTGSYMRLIVKFQVQREVRSYLVQVYWPTVLTTILSWISFWMNYDSSAARVTIGLTSILVLTTIDSHMRDKLPHISCIKAIDIYILVCLFFVFLSLLEYVYINYLFFSQVPRRNHRRCRKPRRVVARYRYQEVVVANVQDGLINVEDRVEDRAGPLPDSPMQAHLASQESLGSLVFTSEQAQLATSESLSLLSSASSQTQLATGESLSDLPSTSEQTVPECTIHFHGFLTNDSIIPIKIHSRSDACDDEDSEESLSSEESHGHGSSHTGRLKLQISQRCVQEASWDLDKIEILQDDISITSSWLGLDEQCKGDADSIWSLTDEELMACDQEKDSSSESEENCSPSPGCSFNEGFSFQLFKPNRVPKVDRWSRFLFPLSFGLFNVVYWLYHVY.

The signal sequence occupies residues 1 to 21 (MGIRGMLRAAALLLLIRTWLA). The Extracellular segment spans residues 22–267 (ESNGPSPTPK…FQVQREVRSY (246 aa)). A glycan (N-linked (GlcNAc...) asparagine) is linked at N127. The cysteines at positions 183 and 197 are disulfide-linked. The chain crosses the membrane as a helical span at residues 268-288 (LVQVYWPTVLTTILSWISFWM). The Cytoplasmic segment spans residues 289–296 (NYDSSAAR). The helical transmembrane segment at 297-314 (VTIGLTSILVLTTIDSHM) threads the bilayer. The Extracellular portion of the chain corresponds to 315–325 (RDKLPHISCIK). The helical transmembrane segment at 326–346 (AIDIYILVCLFFVFLSLLEYV) threads the bilayer. Topologically, residues 347–617 (YINYLFFSQV…NRVPKVDRWS (271 aa)) are cytoplasmic. Positions 491–515 (ACDDEDSEESLSSEESHGHGSSHTG) are disordered. The segment covering 492-502 (CDDEDSEESLS) has biased composition (acidic residues). Residues 618 to 638 (RFLFPLSFGLFNVVYWLYHVY) form a helical membrane-spanning segment.

It belongs to the ligand-gated ion channel (TC 1.A.9) family. Gamma-aminobutyric acid receptor (TC 1.A.9.5) subfamily. GABRQ sub-subfamily. Heteropentamer, formed by a combination of alpha (GABRA1-6), beta (GABRB1-3), gamma (GABRG1-3), delta (GABRD), epsilon (GABRE), rho (GABRR1-3), pi (GABRP) and theta (GABRQ) chains, each subunit exhibiting distinct physiological and pharmacological properties. Expressed in brain, lung, and spleen.

The protein resides in the postsynaptic cell membrane. The protein localises to the cell membrane. It catalyses the reaction chloride(in) = chloride(out). Potentiated by etomidate, propofol, pregnanolone and pentobarbital. Functionally, theta subunit of the heteropentameric ligand-gated chloride channel gated by gamma-aminobutyric acid (GABA), a major inhibitory neurotransmitter in the brain. GABA-gated chloride channels, also named GABA(A) receptors (GABAAR), consist of five subunits arranged around a central pore and contain GABA active binding site(s) located at the alpha and beta subunit interfaces. When activated by GABA, GABAARs selectively allow the flow of chloride anions across the cell membrane down their electrochemical gradient. This Mus musculus (Mouse) protein is Gamma-aminobutyric acid receptor subunit theta.